The primary structure comprises 709 residues: Polyribonucleotide nucleotidyltransferase (709 aa).

Residues aspartate 487 and aspartate 493 each contribute to the Mg(2+) site. Positions proline 554 to isoleucine 613 constitute a KH domain. The S1 motif domain occupies glycine 623 to lysine 691.

The protein belongs to the polyribonucleotide nucleotidyltransferase family. In terms of assembly, component of the RNA degradosome, which is a multiprotein complex involved in RNA processing and mRNA degradation. Requires Mg(2+) as cofactor.

The protein resides in the cytoplasm. The enzyme catalyses RNA(n+1) + phosphate = RNA(n) + a ribonucleoside 5'-diphosphate. Involved in mRNA degradation. Catalyzes the phosphorolysis of single-stranded polyribonucleotides processively in the 3'- to 5'-direction. This is Polyribonucleotide nucleotidyltransferase from Vibrio cholerae serotype O1 (strain ATCC 39315 / El Tor Inaba N16961).